Consider the following 321-residue polypeptide: Hydropyrene synthase (321 aa).

4 residues coordinate Mg(2+): Asp82, Asn225, Ser229, and Glu233. The DDxx(x)D/E motif motif lies at 82 to 87 (DDRAID). An NDxxSxxxD/E motif motif is present at residues 225-233 (NDLHSFARE).

Belongs to the terpene synthase family. Requires Mg(2+) as cofactor.

It catalyses the reaction (2E,6E,10E)-geranylgeranyl diphosphate = hydropyrene + diphosphate. The catalysed reaction is (2E,6E,10E)-geranylgeranyl diphosphate + H2O = hydropyrenol + diphosphate. The enzyme catalyses (2E,6E,10E)-geranylgeranyl diphosphate = isoelisabethatriene + diphosphate. It functions in the pathway secondary metabolite biosynthesis; terpenoid biosynthesis. Its function is as follows. Terpene synthase that catalyzes the conversion of geranylgeranyl diphosphate (GGPP) into a mixture of diterpenes, including hydropyrene (HP), hydropyrenol (HPol), isoelisabethatriene and traces of isoelisabethatriene B. Hydropyrene is the main product. Some other diterpenoids are also produced in very low quantities. This Streptomyces clavuligerus protein is Hydropyrene synthase.